The sequence spans 447 residues: ATP-dependent protease ATPase subunit HslU (447 aa).

Residues isoleucine 18, 60–65 (GVGKTE), aspartate 260, glutamate 325, and arginine 397 each bind ATP.

The protein belongs to the ClpX chaperone family. HslU subfamily. In terms of assembly, a double ring-shaped homohexamer of HslV is capped on each side by a ring-shaped HslU homohexamer. The assembly of the HslU/HslV complex is dependent on binding of ATP.

The protein localises to the cytoplasm. ATPase subunit of a proteasome-like degradation complex; this subunit has chaperone activity. The binding of ATP and its subsequent hydrolysis by HslU are essential for unfolding of protein substrates subsequently hydrolyzed by HslV. HslU recognizes the N-terminal part of its protein substrates and unfolds these before they are guided to HslV for hydrolysis. In Paraburkholderia phymatum (strain DSM 17167 / CIP 108236 / LMG 21445 / STM815) (Burkholderia phymatum), this protein is ATP-dependent protease ATPase subunit HslU.